A 448-amino-acid chain; its full sequence is DNA repair protein RadA (448 aa).

The segment at 10–27 (CQHCGFTSPKWLGKCVQC) adopts a C4-type zinc-finger fold. 96–103 (GSPGVGKS) provides a ligand contact to ATP. The RadA KNRFG motif signature appears at 253 to 257 (KNRFG). A lon-protease-like region spans residues 351–448 (DVFINVSGGI…NVVGKIVEWM (98 aa)).

It belongs to the RecA family. RadA subfamily.

DNA-dependent ATPase involved in processing of recombination intermediates, plays a role in repairing DNA breaks. Stimulates the branch migration of RecA-mediated strand transfer reactions, allowing the 3' invading strand to extend heteroduplex DNA faster. Binds ssDNA in the presence of ADP but not other nucleotides, has ATPase activity that is stimulated by ssDNA and various branched DNA structures, but inhibited by SSB. Does not have RecA's homology-searching function. This chain is DNA repair protein RadA, found in Helicobacter pylori (strain J99 / ATCC 700824) (Campylobacter pylori J99).